Reading from the N-terminus, the 109-residue chain is uncharacterized protein (109 aa).

A helical transmembrane segment spans residues 90–107 (IICNFWGSLLGVGIAFYQ).

The protein resides in the membrane. This is an uncharacterized protein from Saccharomyces cerevisiae (strain ATCC 204508 / S288c) (Baker's yeast).